The sequence spans 159 residues: 2-C-methyl-D-erythritol 2,4-cyclodiphosphate synthase (159 aa).

A divalent metal cation-binding residues include D8 and H10. 4-CDP-2-C-methyl-D-erythritol 2-phosphate contacts are provided by residues D8 to H10 and H34 to S35. H42 contacts a divalent metal cation. Residues D56 to G58, F61 to D65, T132 to E135, F139, and R142 each bind 4-CDP-2-C-methyl-D-erythritol 2-phosphate.

The protein belongs to the IspF family. As to quaternary structure, homotrimer. The cofactor is a divalent metal cation.

The catalysed reaction is 4-CDP-2-C-methyl-D-erythritol 2-phosphate = 2-C-methyl-D-erythritol 2,4-cyclic diphosphate + CMP. It participates in isoprenoid biosynthesis; isopentenyl diphosphate biosynthesis via DXP pathway; isopentenyl diphosphate from 1-deoxy-D-xylulose 5-phosphate: step 4/6. Involved in the biosynthesis of isopentenyl diphosphate (IPP) and dimethylallyl diphosphate (DMAPP), two major building blocks of isoprenoid compounds. Catalyzes the conversion of 4-diphosphocytidyl-2-C-methyl-D-erythritol 2-phosphate (CDP-ME2P) to 2-C-methyl-D-erythritol 2,4-cyclodiphosphate (ME-CPP) with a corresponding release of cytidine 5-monophosphate (CMP). This chain is 2-C-methyl-D-erythritol 2,4-cyclodiphosphate synthase, found in Syntrophobacter fumaroxidans (strain DSM 10017 / MPOB).